The sequence spans 233 residues: Bcl-2-like protein 1 (233 aa).

A BH4 motif is present at residues 4-24; the sequence is SNRELVVDFLSYKLSQKGYSW. The disordered stretch occupies residues 28–71; that stretch reads SDVEENRTEAPEGTESEMETPSAINGNPSWHLADSPAVNGATGH. Phosphoserine; by PLK3 is present on S49. Residue S62 is modified to Phosphoserine; by CDK1. A BH3 motif is present at residues 86 to 100; it reads VKQALREAGDEFELR. The short motif at 129 to 148 is the BH1 element; it reads ELFRDGVNWGRIVAFFSFGG. A BH2 motif is present at residues 180 to 195; it reads PWIQENGGWDTFVELY. A helical transmembrane segment spans residues 210 to 226; the sequence is FNRWFLTGMTVAGVVLL.

The protein belongs to the Bcl-2 family. As to quaternary structure, homodimer. Interacts with BCL2L11. Interacts with BAD. Interacts with PGAM5. Interacts with HEBP2. Interacts with p53/TP53 and BBC3; interaction with BBC3 disrupts the interaction with p53/TP53. Interacts with ATP5F1A and ATP5F1B; the interactions mediate the association of isoform Bcl-X(L) with the mitochondrial membrane ATP synthase F(1)F(0) ATP synthase. Interacts with VDAC1. Interacts with BCL2L11 (via BH3). Interacts with RNF183. Interacts with GIMAP3/IAN4 and GIMAP5/IAN5. Interacts with GIMAP5 and HSPA8/HSC70; the interaction between HSPA8 and BCL2L1 is impaired in the absence of GIMAP5. Interacts with isoform 4 of CLU; this interaction releases and activates BAX and promotes cell death. Forms heterodimers with BAX, BAK or BCL2; heterodimerization with BAX does not seem to be required for anti-apoptotic activity. Interacts with isoform 1 of SIVA1; the interaction inhibits the anti-apoptotic activity. Interacts with IKZF3. Interacts with RTL10/BOP. Interacts with DNM1L and CLTA; DNM1L and BCL2L1 isoform BCL-X(L) may form a complex in synaptic vesicles that also contains clathrin and MFF. Interacts (via the loop between motifs BH4 and BH3) with NLRP1 (via LRR repeats), but not with NLRP2, NLRP3, NLRP4, PYCARD, nor MEFV. Interacts with BECN1. In terms of processing, proteolytically cleaved by caspases during apoptosis. The cleaved protein, lacking the BH4 motif, has pro-apoptotic activity. Phosphorylated on Ser-62 by CDK1. This phosphorylation is partial in normal mitotic cells, but complete in G2-arrested cells upon DNA-damage, thus promoting subsequent apoptosis probably by triggering caspases-mediated proteolysis. Phosphorylated by PLK3, leading to regulate the G2 checkpoint and progression to cytokinesis during mitosis. Phosphorylation at Ser-49 appears during the S phase and G2, disappears rapidly in early mitosis during prometaphase, metaphase and early anaphase, and re-appears during telophase and cytokinesis. Post-translationally, ubiquitinated by RNF183 during prolonged ER stress, leading to degradation by the proteosome. In terms of tissue distribution, bcl-X(S) is expressed at high levels in cells that undergo a high rate of turnover, such as developing lymphocytes. In contrast, Bcl-X(L) is found in tissues containing long-lived postmitotic cells, such as adult brain.

It is found in the mitochondrion inner membrane. Its subcellular location is the mitochondrion outer membrane. The protein localises to the mitochondrion matrix. The protein resides in the cytoplasmic vesicle. It localises to the secretory vesicle. It is found in the synaptic vesicle membrane. Its subcellular location is the cytoplasm. The protein localises to the cytosol. The protein resides in the cytoskeleton. It localises to the microtubule organizing center. It is found in the centrosome. Its subcellular location is the nucleus membrane. Its function is as follows. Potent inhibitor of cell death. Inhibits activation of caspases. Appears to regulate cell death by blocking the voltage-dependent anion channel (VDAC) by binding to it and preventing the release of the caspase activator, CYC1, from the mitochondrial membrane. Also acts as a regulator of G2 checkpoint and progression to cytokinesis during mitosis. In terms of biological role, isoform Bcl-X(L) also regulates presynaptic plasticity, including neurotransmitter release and recovery, number of axonal mitochondria as well as size and number of synaptic vesicle clusters. During synaptic stimulation, increases ATP availability from mitochondria through regulation of mitochondrial membrane ATP synthase F(1)F(0) activity and regulates endocytic vesicle retrieval in hippocampal neurons through association with DMN1L and stimulation of its GTPase activity in synaptic vesicles. May attenuate inflammation impairing NLRP1-inflammasome activation, hence CASP1 activation and IL1B release. Functionally, isoform Bcl-X(S) promotes apoptosis. The protein is Bcl-2-like protein 1 (BCL2L1) of Homo sapiens (Human).